The chain runs to 325 residues: Beta-ketoacyl-[acyl-carrier-protein] synthase III (325 aa).

Residues C119 and H252 contribute to the active site. Residues 253 to 257 form an ACP-binding region; that stretch reads QANIR. Residue N282 is part of the active site.

The protein belongs to the thiolase-like superfamily. FabH family. As to quaternary structure, homodimer.

It is found in the cytoplasm. The catalysed reaction is malonyl-[ACP] + acetyl-CoA + H(+) = 3-oxobutanoyl-[ACP] + CO2 + CoA. Its pathway is lipid metabolism; fatty acid biosynthesis. Its function is as follows. Catalyzes the condensation reaction of fatty acid synthesis by the addition to an acyl acceptor of two carbons from malonyl-ACP. Catalyzes the first condensation reaction which initiates fatty acid synthesis and may therefore play a role in governing the total rate of fatty acid production. Possesses both acetoacetyl-ACP synthase and acetyl transacylase activities. Its substrate specificity determines the biosynthesis of branched-chain and/or straight-chain of fatty acids. This chain is Beta-ketoacyl-[acyl-carrier-protein] synthase III, found in Paracidovorax citrulli (strain AAC00-1) (Acidovorax citrulli).